Reading from the N-terminus, the 411-residue chain is Putative BMP-2-inducible kinase-like protein (411 aa).

Disordered regions lie at residues 1 to 87 (MIAP…TQDI), 215 to 280 (SQQQ…RVSQ), and 392 to 411 (QQSQ…PSKQ). Composition is skewed to basic and acidic residues over residues 8 to 18 (SSEEEGQKDEE) and 53 to 68 (EKRS…KAKY). Residues 47–71 (EDEEEEEKRSSDSDYEQAKAKYSDM) adopt a coiled-coil conformation. 2 stretches are compositionally biased toward basic residues: residues 220-234 (VKQR…RQRR) and 243-258 (NGKR…KKTL).

This is Putative BMP-2-inducible kinase-like protein (BMP2KL) from Homo sapiens (Human).